The sequence spans 60 residues: DNA-directed RNA polymerase subunit Rpo6 (60 aa).

This sequence belongs to the archaeal Rpo6/eukaryotic RPB6 RNA polymerase subunit family. As to quaternary structure, part of the RNA polymerase complex.

It localises to the cytoplasm. The enzyme catalyses RNA(n) + a ribonucleoside 5'-triphosphate = RNA(n+1) + diphosphate. Its function is as follows. DNA-dependent RNA polymerase (RNAP) catalyzes the transcription of DNA into RNA using the four ribonucleoside triphosphates as substrates. The chain is DNA-directed RNA polymerase subunit Rpo6 from Methanothrix thermoacetophila (strain DSM 6194 / JCM 14653 / NBRC 101360 / PT) (Methanosaeta thermophila).